Here is a 73-residue protein sequence, read N- to C-terminus: Putative membrane protein insertion efficiency factor (73 aa).

Belongs to the UPF0161 family.

The protein localises to the cell inner membrane. Functionally, could be involved in insertion of integral membrane proteins into the membrane. This Neisseria meningitidis serogroup C / serotype 2a (strain ATCC 700532 / DSM 15464 / FAM18) protein is Putative membrane protein insertion efficiency factor.